The following is a 346-amino-acid chain: Dihydroorotase (346 aa).

Zn(2+) contacts are provided by His-13 and His-15. Substrate is bound by residues 15–17 (HLR) and Asn-41. Lys-99, His-136, and His-174 together coordinate Zn(2+). The residue at position 99 (Lys-99) is an N6-carboxylysine. His-136 serves as a coordination point for substrate. Leu-219 is a substrate binding site. Asp-247 contacts Zn(2+). Asp-247 is a catalytic residue. Substrate contacts are provided by His-251 and Ala-263.

Belongs to the metallo-dependent hydrolases superfamily. DHOase family. Class II DHOase subfamily. Homodimer. Zn(2+) is required as a cofactor.

It catalyses the reaction (S)-dihydroorotate + H2O = N-carbamoyl-L-aspartate + H(+). It participates in pyrimidine metabolism; UMP biosynthesis via de novo pathway; (S)-dihydroorotate from bicarbonate: step 3/3. Catalyzes the reversible cyclization of carbamoyl aspartate to dihydroorotate. The sequence is that of Dihydroorotase from Rhizobium leguminosarum bv. trifolii (strain WSM2304).